A 220-amino-acid polypeptide reads, in one-letter code: UPF0319 protein Ent638_1476 (220 aa).

The first 20 residues, 1–20 (MKTGIVSAVLALVMPVCVYA), serve as a signal peptide directing secretion.

Belongs to the UPF0319 family.

This is UPF0319 protein Ent638_1476 from Enterobacter sp. (strain 638).